The chain runs to 384 residues: Substance-K receptor (384 aa).

The Extracellular segment spans residues 1–32 (MGAHAIVTDANISSSLENNTTGITAFSMPGWQ). N-linked (GlcNAc...) asparagine glycans are attached at residues Asn11, Asn18, and Asn19. The helical transmembrane segment at 33 to 56 (LALWATAYLVLVLVAVTGNATVIW) threads the bilayer. The Cytoplasmic portion of the chain corresponds to 57-69 (IILAHQRMRTVTN). The chain crosses the membrane as a helical span at residues 70 to 90 (YFIVNLALADLCMAAFNAAFN). The Extracellular segment spans residues 91 to 107 (FVYASHNIWYFGRAFCH). Cys106 and Cys181 are oxidised to a cystine. A helical membrane pass occupies residues 108 to 129 (FQNLFPITAMFVSIYSMTAIAA). Residues 130 to 149 (DRYVAIVHPFQPRLSAPGTR) are Cytoplasmic-facing. The helical transmembrane segment at 150-170 (AVIAGIWLLALALAFPQCFYS) threads the bilayer. Residues 171–196 (TITMDQGATKCVVVWPEDNGSKMLLL) are Extracellular-facing. The chain crosses the membrane as a helical span at residues 197-218 (YHLVVIALIYVLPLLVMLLAYS). Over 219–251 (VIGLTLWRREVPRHQVHGASLRHLRAKKKFVKT) the chain is Cytoplasmic. The helical transmembrane segment at 252–272 (MVLVVVTFAICWLPYHFYFIL) threads the bilayer. Topologically, residues 273-290 (GSFQEDIYYHKFIQQVYL) are extracellular. A helical membrane pass occupies residues 291–310 (ALFWLAMSSTMYNPIIYCCL). Topologically, residues 311–384 (NHRFRSGFRL…GPQDGLPDEP (74 aa)) are cytoplasmic. Residue Cys324 is the site of S-palmitoyl cysteine attachment.

This sequence belongs to the G-protein coupled receptor 1 family.

It is found in the cell membrane. In terms of biological role, this is a receptor for the tachykinin neuropeptide substance K (neurokinin A). It is associated with G proteins that activate a phosphatidylinositol-calcium second messenger system. The protein is Substance-K receptor (TACR2) of Canis lupus familiaris (Dog).